Consider the following 461-residue polypeptide: MSRINKNVVLALLTLTSSAFLLFQLYYYKHYLSTKNGAGLSKSKGSRIGFDSTQWRAVKKFIMLTSNQNVPVFLIDPLILELINKNFEQVKNTSHGSTSQCKFFCVPRDFTAFALQYHLWKNEEGWFRIAENMGFQCLKIESKDPRLDGIDSLSGTEIPLHYICKLATHAIHLVVFHERSGNYLWHGHLRLKEHIDRKFVPFRKLQFGRYPGAFDRPELQQVTVDGLEVLIPKDPMHFVEEVPHSRFIECRYKEARAFFQQYLDDNTVEAVAFRKSAKELLQLAAKTLNKLGVPFWLSSGTCLGWYRQCNIIPYSKDVDLGIFIQDYKSDIILAFQDAGLPLKHKFGKVEDSLELSFQGKDDVKLDVFFFYEETDHMWNGGTQAKTGKKFKYLFPKFTLCWTEFVDMKVHVPCETLEYIEANYGKTWKIPVKTWDWKRSPPNVQPNGIWPISEWDEVIQLY.

At 1–7 the chain is on the cytoplasmic side; the sequence is MSRINKN. Positions 6 to 27 are required and sufficient for interaction with POMGNT1; that stretch reads KNVVLALLTLTSSAFLLFQLYY. The chain crosses the membrane as a helical; Signal-anchor for type II membrane protein span at residues 8–28; the sequence is VVLALLTLTSSAFLLFQLYYY. The Lumenal segment spans residues 29–461; sequence KHYLSTKNGA…SEWDEVIQLY (433 aa). A glycan (N-linked (GlcNAc...) asparagine) is linked at asparagine 92.

The protein belongs to the LicD transferase family. As to quaternary structure, forms a complex composed of FKTN/fukutin, FKRP and RXYLT1/TMEM5. Interacts (via transmembrane domain) with POMGNT1; the interaction is direct and is required for normal POMGNT1 location in Golgi membranes. As to expression, expressed in the retina (at protein level). Widely expressed with highest expression in brain, heart, pancreas and skeletal muscle. Expressed at similar levels in control fetal and adult brain. Expressed in migrating neurons, including Cajar-Retzius cells and adult cortical neurons, as well as hippocampal pyramidal cells and cerebellar Purkinje cells. No expression observed in the glia limitans, the subpial astrocytes (which contribute to basement membrane formation) or other glial cells.

It localises to the golgi apparatus membrane. Its subcellular location is the cytoplasm. It is found in the nucleus. It carries out the reaction 3-O-[beta-D-GalNAc-(1-&gt;3)-beta-D-GlcNAc-(1-&gt;4)-(O-6-P-alpha-D-Man)]-Thr-[protein] + CDP-L-ribitol = 3-O-[Rib-ol-P-3-beta-D-GalNAc-(1-&gt;3)-beta-D-GlcNAc-(1-&gt;4)-(O-6-P-alpha-D-Man)]-Thr-[protein] + CMP + H(+). It participates in protein modification; protein glycosylation. Its function is as follows. Catalyzes the transfer of a ribitol-phosphate from CDP-ribitol to the distal N-acetylgalactosamine of the phosphorylated O-mannosyl trisaccharide (N-acetylgalactosamine-beta-3-N-acetylglucosamine-beta-4-(phosphate-6-)mannose), a carbohydrate structure present in alpha-dystroglycan (DAG1). This constitutes the first step in the formation of the ribitol 5-phosphate tandem repeat which links the phosphorylated O-mannosyl trisaccharide to the ligand binding moiety composed of repeats of 3-xylosyl-alpha-1,3-glucuronic acid-beta-1. Required for normal location of POMGNT1 in Golgi membranes, and for normal POMGNT1 activity. May interact with and reinforce a large complex encompassing the outside and inside of muscle membranes. Could be involved in brain development. The protein is Ribitol-5-phosphate transferase FKTN of Homo sapiens (Human).